We begin with the raw amino-acid sequence, 745 residues long: Polyribonucleotide nucleotidyltransferase (745 aa).

2 residues coordinate Mg(2+): Asp-487 and Asp-493. Residues 554-613 enclose the KH domain; the sequence is PRIETMQIPTDKIRDVIGTGGKIIREIVEKTGAKINIEDTGIVKIASSDGKAIKAAYNWI. Residues 623–691 enclose the S1 motif domain; sequence GTIYDGTIVK…ERGKIRLSMK (69 aa). The interval 695–745 is disordered; the sequence is QETGEDLTEKLKAERAERGEPEREERSDRGDRGDRGPRRDRGERRRESSGE. Residues 701–745 show a composition bias toward basic and acidic residues; it reads LTEKLKAERAERGEPEREERSDRGDRGDRGPRRDRGERRRESSGE.

This sequence belongs to the polyribonucleotide nucleotidyltransferase family. The cofactor is Mg(2+).

It localises to the cytoplasm. The catalysed reaction is RNA(n+1) + phosphate = RNA(n) + a ribonucleoside 5'-diphosphate. Involved in mRNA degradation. Catalyzes the phosphorolysis of single-stranded polyribonucleotides processively in the 3'- to 5'-direction. This is Polyribonucleotide nucleotidyltransferase from Methylorubrum extorquens (strain CM4 / NCIMB 13688) (Methylobacterium extorquens).